A 623-amino-acid chain; its full sequence is Aspartate--tRNA(Asp/Asn) ligase (623 aa).

Position 175 (Glu-175) interacts with L-aspartate. Residues 199-202 are aspartate; the sequence is QQYK. 2 residues coordinate L-aspartate: Arg-221 and His-483. ATP is bound at residue 221–223; it reads RDE. Residue Glu-517 coordinates ATP. Arg-524 provides a ligand contact to L-aspartate. 569–572 serves as a coordination point for ATP; sequence GVDR.

It belongs to the class-II aminoacyl-tRNA synthetase family. Type 1 subfamily. Homodimer.

The protein resides in the cytoplasm. The catalysed reaction is tRNA(Asx) + L-aspartate + ATP = L-aspartyl-tRNA(Asx) + AMP + diphosphate. Its function is as follows. Aspartyl-tRNA synthetase with relaxed tRNA specificity since it is able to aspartylate not only its cognate tRNA(Asp) but also tRNA(Asn). Reaction proceeds in two steps: L-aspartate is first activated by ATP to form Asp-AMP and then transferred to the acceptor end of tRNA(Asp/Asn). The polypeptide is Aspartate--tRNA(Asp/Asn) ligase (Xanthobacter autotrophicus (strain ATCC BAA-1158 / Py2)).